Consider the following 263-residue polypeptide: Lens fiber major intrinsic protein (263 aa).

The Cytoplasmic portion of the chain corresponds to 1-9 (MWELRSASF). The chain crosses the membrane as a helical span at residues 10-29 (WRAICAEFFASLFYVFFGLG). Residues 30-41 (ASLRWAPGPLHV) are Extracellular-facing. A helical membrane pass occupies residues 42 to 59 (LQVALAFGLALATLVQAV). Residues 60–61 (GH) are Cytoplasmic-facing. The discontinuously helical intramembrane region spans 62-77 (ISGAHVNPAVTFAFLV). Positions 68 to 70 (NPA) match the NPA 1 motif. Topologically, residues 78 to 82 (GSQMS) are cytoplasmic. A helical transmembrane segment spans residues 83–106 (LLRAICYMVAQLLGAVAGAAVLYS). Over 107–127 (VTPPAVRGNLALNTLHPGVSV) the chain is Extracellular. A helical transmembrane segment spans residues 128–148 (GQATIVEIFLTLQFVLCIFAT). Residues 149 to 156 (YDERRNGR) are Cytoplasmic-facing. Residues 157-175 (LGSVALAVGFSLTLGHLFG) form a helical membrane-spanning segment. The Extracellular portion of the chain corresponds to 176 to 178 (MYY). Positions 179 to 193 (TGAGMNPARSFAPAI) form an intramembrane region, discontinuously helical. The NPA 2 signature appears at 184–186 (NPA). The Extracellular portion of the chain corresponds to 194 to 200 (LTRNFTN). The helical transmembrane segment at 201-222 (HWVYWVGPVIGAGLGSLLYDFL) threads the bilayer. The Cytoplasmic portion of the chain corresponds to 223–263 (LFPRLKSVSERLSILKGSRPSESNGQPEVTGEPVELKTQAL). The segment at 227-237 (LKSVSERLSIL) is interaction with CALM. S235 bears the Phosphoserine mark. Residues 239–263 (GSRPSESNGQPEVTGEPVELKTQAL) form a disordered region. Position 243 is a phosphoserine; by PKA (S243). Residue S245 is modified to Phosphoserine. N246 carries the deamidated asparagine modification.

Belongs to the MIP/aquaporin (TC 1.A.8) family. Homotetramer; each monomer provides an independent water pore. Two homotetramers on opposing membranes can dimerize, forming a cell-cell junction. Interacts with CALM; the calcium-calmodulin/CALM complex interacts with the cytoplasmic domains of two aquaporins, leading to channel closure. Interacts with BFSP1 (via C-terminus); prevents calcium-dependent inhibition of the water channel activity. In terms of processing, fatty acylated at Met-1 and Lys-238. The acyl modifications, in decreasing order of ion abundance, are: oleoyl (C18:1) &gt; palmitoyl (C16:0) &gt; stearoyl (C18:0) &gt; eicosenoyl (C20:1) &gt; dihomo-gamma-linolenoyl (C20:3) &gt; palmitoleoyl (C16:1) &gt; eicosadienoyl (C20:2). Post-translationally, subject to partial proteolytic cleavage in the eye lens core. Partial proteolysis promotes interactions between tetramers from adjoining membranes. Major component of lens fiber junctions.

The protein resides in the cell membrane. It is found in the cell junction. The enzyme catalyses H2O(in) = H2O(out). The water channel activity is inhibited by calcium through calmodulin/CALM. Functionally, aquaporins form homotetrameric transmembrane channels, with each monomer independently mediating water transport across the plasma membrane along its osmotic gradient. Specifically expressed in lens fiber cells, this aquaporin is crucial for maintaining lens water homeostasis and transparency. Beyond water permeability, it also acts as a cell-to-cell adhesion molecule, forming thin junctions between lens fiber cells that are essential for maintaining the ordered structure and transparency of the lens. This is Lens fiber major intrinsic protein from Bos taurus (Bovine).